The sequence spans 101 residues: Small ribosomal subunit protein uS14 (101 aa).

It belongs to the universal ribosomal protein uS14 family. As to quaternary structure, part of the 30S ribosomal subunit. Contacts proteins S3 and S10.

Its function is as follows. Binds 16S rRNA, required for the assembly of 30S particles and may also be responsible for determining the conformation of the 16S rRNA at the A site. The polypeptide is Small ribosomal subunit protein uS14 (Blochmanniella floridana).